The following is a 237-amino-acid chain: Riboflavin kinase (237 aa).

The tract at residues 1–101 (MRLKIKAIWV…SRIFSSEPDV (101 aa)) is unknown. The interval 102-237 (LELEGNVLKG…VKKQGMEGQK (136 aa)) is riboflavin kinase. 111–116 (GLGEGQ) is a binding site for CDP. Thr140 and Asn142 together coordinate Mg(2+). Positions 197 and 205 each coordinate FMN. Residue 210–213 (VKLR) participates in CDP binding.

It belongs to the archaeal riboflavin kinase family. Mg(2+) serves as cofactor.

It carries out the reaction riboflavin + CTP = CDP + FMN + H(+). It functions in the pathway cofactor biosynthesis; FMN biosynthesis; FMN from riboflavin (CTP route): step 1/1. Catalyzes the CTP-dependent phosphorylation of riboflavin (vitamin B2) to form flavin mononucleotide (FMN). The chain is Riboflavin kinase (ribK) from Methanosarcina acetivorans (strain ATCC 35395 / DSM 2834 / JCM 12185 / C2A).